A 203-amino-acid polypeptide reads, in one-letter code: Glycerol-3-phosphate acyltransferase (203 aa).

5 helical membrane passes run Leu6 to Val26, Ala56 to Phe76, Ala82 to Phe102, Ala118 to Ile138, and Tyr141 to Asp161.

The protein belongs to the PlsY family. As to quaternary structure, probably interacts with PlsX.

It is found in the cell inner membrane. It catalyses the reaction an acyl phosphate + sn-glycerol 3-phosphate = a 1-acyl-sn-glycero-3-phosphate + phosphate. Its pathway is lipid metabolism; phospholipid metabolism. Its function is as follows. Catalyzes the transfer of an acyl group from acyl-phosphate (acyl-PO(4)) to glycerol-3-phosphate (G3P) to form lysophosphatidic acid (LPA). This enzyme utilizes acyl-phosphate as fatty acyl donor, but not acyl-CoA or acyl-ACP. The polypeptide is Glycerol-3-phosphate acyltransferase (Shewanella loihica (strain ATCC BAA-1088 / PV-4)).